The chain runs to 153 residues: Large ribosomal subunit protein uL22 (153 aa).

The protein belongs to the universal ribosomal protein uL22 family. As to quaternary structure, part of the 50S ribosomal subunit.

Functionally, this protein binds specifically to 23S rRNA. It makes multiple contacts with different domains of the 23S rRNA in the assembled 50S subunit and ribosome. Its function is as follows. The globular domain of the protein is located near the polypeptide exit tunnel on the outside of the subunit, while an extended beta-hairpin is found that lines the wall of the exit tunnel in the center of the 70S ribosome. The sequence is that of Large ribosomal subunit protein uL22 from Methanocella arvoryzae (strain DSM 22066 / NBRC 105507 / MRE50).